Reading from the N-terminus, the 124-residue chain is Small ribosomal subunit protein uS13 (124 aa).

The segment at 95 to 124 is disordered; sequence GLPVNGQRTRTNARSSKGPRRTVAGKKKAR. Residues 100-109 are compositionally biased toward polar residues; the sequence is GQRTRTNARS. A compositionally biased stretch (basic residues) spans 111-124; it reads KGPRRTVAGKKKAR.

The protein belongs to the universal ribosomal protein uS13 family. Part of the 30S ribosomal subunit. Forms a loose heterodimer with protein S19. Forms two bridges to the 50S subunit in the 70S ribosome.

In terms of biological role, located at the top of the head of the 30S subunit, it contacts several helices of the 16S rRNA. In the 70S ribosome it contacts the 23S rRNA (bridge B1a) and protein L5 of the 50S subunit (bridge B1b), connecting the 2 subunits; these bridges are implicated in subunit movement. Contacts the tRNAs in the A and P-sites. The chain is Small ribosomal subunit protein uS13 from Tropheryma whipplei (strain TW08/27) (Whipple's bacillus).